A 643-amino-acid chain; its full sequence is UvrABC system protein C (643 aa).

One can recognise a GIY-YIG domain in the interval 25 to 104 (AEPGVYFMRD…IKQHQPHFNV (80 aa)). One can recognise a UVR domain in the interval 214–249 (SELVELLEAQMLQAAENLEFEKAAKIRDQIRGLEGL).

This sequence belongs to the UvrC family. As to quaternary structure, interacts with UvrB in an incision complex.

It localises to the cytoplasm. Its function is as follows. The UvrABC repair system catalyzes the recognition and processing of DNA lesions. UvrC both incises the 5' and 3' sides of the lesion. The N-terminal half is responsible for the 3' incision and the C-terminal half is responsible for the 5' incision. The chain is UvrABC system protein C from Synechococcus elongatus (strain ATCC 33912 / PCC 7942 / FACHB-805) (Anacystis nidulans R2).